A 156-amino-acid polypeptide reads, in one-letter code: Small ribosomal subunit protein uS7 (156 aa).

Belongs to the universal ribosomal protein uS7 family. Part of the 30S ribosomal subunit. Contacts proteins S9 and S11.

Its function is as follows. One of the primary rRNA binding proteins, it binds directly to 16S rRNA where it nucleates assembly of the head domain of the 30S subunit. Is located at the subunit interface close to the decoding center, probably blocks exit of the E-site tRNA. This Trichormus variabilis (strain ATCC 29413 / PCC 7937) (Anabaena variabilis) protein is Small ribosomal subunit protein uS7.